We begin with the raw amino-acid sequence, 396 residues long: Elongation factor Tu (396 aa).

Residues Lys10–Lys206 form the tr-type G domain. The interval Gly19–Thr26 is G1. Gly19–Thr26 contributes to the GTP binding site. Thr26 is a Mg(2+) binding site. The G2 stretch occupies residues Gly60 to Ser64. The G3 stretch occupies residues Asp81 to Gly84. GTP-binding positions include Asp81 to His85 and Asn136 to Asp139. Residues Asn136–Asp139 are G4. The tract at residues Ser174 to Leu176 is G5.

This sequence belongs to the TRAFAC class translation factor GTPase superfamily. Classic translation factor GTPase family. EF-Tu/EF-1A subfamily. In terms of assembly, monomer.

The protein localises to the cytoplasm. The catalysed reaction is GTP + H2O = GDP + phosphate + H(+). Functionally, GTP hydrolase that promotes the GTP-dependent binding of aminoacyl-tRNA to the A-site of ribosomes during protein biosynthesis. This Dichelobacter nodosus (strain VCS1703A) protein is Elongation factor Tu.